We begin with the raw amino-acid sequence, 189 residues long: Phosphoheptose isomerase (189 aa).

One can recognise an SIS domain in the interval 34–189; the sequence is LVAALKGGKK…CDLVEKGLFK (156 aa). A substrate-binding site is contributed by 49–51; sequence NGG. Residues His58 and Glu62 each contribute to the Zn(2+) site. Substrate contacts are provided by residues Glu62, 91-92, 117-119, Ser122, and Gln169; these read ND and STS. Residues Gln169 and His177 each contribute to the Zn(2+) site.

It belongs to the SIS family. GmhA subfamily. In terms of assembly, homotetramer. Zn(2+) serves as cofactor.

The protein localises to the cytoplasm. The catalysed reaction is 2 D-sedoheptulose 7-phosphate = D-glycero-alpha-D-manno-heptose 7-phosphate + D-glycero-beta-D-manno-heptose 7-phosphate. Its pathway is carbohydrate biosynthesis; D-glycero-D-manno-heptose 7-phosphate biosynthesis; D-glycero-alpha-D-manno-heptose 7-phosphate and D-glycero-beta-D-manno-heptose 7-phosphate from sedoheptulose 7-phosphate: step 1/1. Its function is as follows. Catalyzes the isomerization of sedoheptulose 7-phosphate in D-glycero-D-manno-heptose 7-phosphate. The protein is Phosphoheptose isomerase of Geobacter metallireducens (strain ATCC 53774 / DSM 7210 / GS-15).